A 101-amino-acid polypeptide reads, in one-letter code: UPF0060 membrane protein ACIAD1364 (101 aa).

Helical transmembrane passes span 24-44 (WLWL…TLHP), 50-70 (IYAA…RFID), and 79-99 (IWGG…PQGL).

Belongs to the UPF0060 family.

It is found in the cell inner membrane. The sequence is that of UPF0060 membrane protein ACIAD1364 from Acinetobacter baylyi (strain ATCC 33305 / BD413 / ADP1).